Reading from the N-terminus, the 359-residue chain is Ribosomal RNA large subunit methyltransferase M (359 aa).

Residues Ser186, 219-222 (CPGG), Asp238, Asp258, and Asp275 contribute to the S-adenosyl-L-methionine site. Lys304 serves as the catalytic Proton acceptor.

The protein belongs to the class I-like SAM-binding methyltransferase superfamily. RNA methyltransferase RlmE family. RlmM subfamily. Monomer.

The protein localises to the cytoplasm. The enzyme catalyses cytidine(2498) in 23S rRNA + S-adenosyl-L-methionine = 2'-O-methylcytidine(2498) in 23S rRNA + S-adenosyl-L-homocysteine + H(+). Catalyzes the 2'-O-methylation at nucleotide C2498 in 23S rRNA. This is Ribosomal RNA large subunit methyltransferase M from Vibrio parahaemolyticus serotype O3:K6 (strain RIMD 2210633).